Reading from the N-terminus, the 780-residue chain is Tyrosine-protein phosphatase non-receptor type 12 (780 aa).

Met1 is subject to N-acetylmethionine. Phosphoserine is present on Ser19. Positions 28-293 constitute a Tyrosine-protein phosphatase domain; it reads FARDFMRLRR…ELVHRAIAQL (266 aa). Substrate contacts are provided by residues Arg36, 63 to 67, Asp199, 231 to 237, and Gln278; these read RYKDI and CSAGCGR. Catalysis depends on Cys231, which acts as the Phosphocysteine intermediate. A phosphoserine mark is found at Ser332, Ser435, Ser449, and Ser468. The tract at residues 345-438 is interaction with TGFB1I1; the sequence is VEGDAKEEIL…KLERNLSFEI (94 aa). Residues 502–519 show a composition bias toward polar residues; that stretch reads QSNKVSVTPPEESQNSDT. Disordered regions lie at residues 502–639, 657–725, and 744–780; these read QSNK…STES, GTTH…EKCD, and SDKR…SEWT. 2 positions are modified to phosphothreonine: Thr509 and Thr519. A compositionally biased stretch (basic and acidic residues) spans 521 to 533; that stretch reads PRPDRLPLDEKGH. 2 stretches are compositionally biased toward polar residues: residues 552–577 and 587–601; these read EGNS…TQVE and TSPL…TNPL. Ser567 bears the Phosphoserine mark. Thr569 bears the Phosphothreonine mark. A phosphoserine mark is found at Ser571 and Ser596. Thr598 is modified (phosphothreonine). A compositionally biased stretch (basic and acidic residues) spans 602-613; it reads HSDDSDSDERNS. Phosphoserine occurs at positions 603, 606, 608, and 613. Positions 622 to 639 are enriched in low complexity; sequence TNISTASATVSAATSTES. Residues Ser673 and Ser689 each carry the phosphoserine modification. Residues 690 to 703 show a composition bias toward polar residues; it reads EHNTPVRSEWSELQ. Thr693 is subject to Phosphothreonine. 2 stretches are compositionally biased toward basic and acidic residues: residues 704–725 and 771–780; these read SQER…EKCD and GPRDPPSEWT.

It belongs to the protein-tyrosine phosphatase family. Non-receptor class 4 subfamily. In terms of assembly, interacts with TGFB1I1. Interacts with PSTPIP1. Interacts with PTK2B/PYK2. Interacts with LPXN. Interacts with SORBS2; this interaction greatly enhances WASF1 dephosphorylation and might mediate partial translocation to focal adhesion sites. Phosphorylated by STK24/MST3 and this results in inhibition of its activity.

Its subcellular location is the cytoplasm. It is found in the cell junction. The protein localises to the focal adhesion. It localises to the cell projection. The protein resides in the podosome. It catalyses the reaction O-phospho-L-tyrosyl-[protein] + H2O = L-tyrosyl-[protein] + phosphate. In terms of biological role, dephosphorylates a range of proteins, and thereby regulates cellular signaling cascades. Dephosphorylates cellular tyrosine kinases, such as ERBB2 and PTK2B/PYK2, and thereby regulates signaling via ERBB2 and PTK2B/PYK2. Selectively dephosphorylates ERBB2 phosphorylated at 'Tyr-1112', 'Tyr-1196', and/or 'Tyr-1248'. This chain is Tyrosine-protein phosphatase non-receptor type 12 (PTPN12), found in Homo sapiens (Human).